The chain runs to 288 residues: MDERAALELVGGLVSRAGDDAAVVGDTALTIDMLHDATDFPSGTTRYTAGWRSVGASLSDVAATGATATAAVAAYGAPGFDDDELAAFVTGARDVCTAVGAEYVGGDLDGHSEFTVATAAIGDADHRVTRSGARPGDSVVVTGSLGRSAAAMALFDAGDTERANDLFQFMPRVAAGRVLGAHATAMMDASDGLARSLHQLAAASDCGMAVDSGRLPVADALAEVTADPVERAVSFGGDFELVAAVPPERVEAARAAVPGSLSVVGRVTAAADGVRLDGDALADDGWTH.

Residues Asp-20, Thr-30, and Asp-32 each coordinate Mg(2+). Asp-39 serves as a coordination point for substrate. Mg(2+) contacts are provided by Asp-60 and Asp-107. Residues 106–107 (GD) and Arg-130 each bind ATP. A Mg(2+)-binding site is contributed by Asp-188. Ser-190 lines the ATP pocket. Asp-191 provides a ligand contact to Mg(2+). Trp-286 provides a ligand contact to substrate.

It belongs to the thiamine-monophosphate kinase family.

It catalyses the reaction thiamine phosphate + ATP = thiamine diphosphate + ADP. It participates in cofactor biosynthesis; thiamine diphosphate biosynthesis; thiamine diphosphate from thiamine phosphate: step 1/1. Functionally, catalyzes the ATP-dependent phosphorylation of thiamine-monophosphate (TMP) to form thiamine-pyrophosphate (TPP), the active form of vitamin B1. The polypeptide is Thiamine-monophosphate kinase (Halobacterium salinarum (strain ATCC 700922 / JCM 11081 / NRC-1) (Halobacterium halobium)).